A 1276-amino-acid polypeptide reads, in one-letter code: Probable histone acetyltransferase HAC-like 3 (1276 aa).

The tract at residues 391–421 (VDRAEQTSNSTVSKPTSPASDGSSGKHYPAK) is disordered. Residues 396–413 (QTSNSTVSKPTSPASDGS) are compositionally biased toward polar residues. The PHD-type zinc-finger motif lies at 621–689 (SSICGRCHHL…EYTCAKCFLK (69 aa)). The CBP/p300-type HAT domain maps to 704–1130 (ILGARELPRT…ILYHLHDSTC (427 aa)). Residues 827–829 (IDS), 846–847 (RT), and W902 each bind acetyl-CoA. A coiled-coil region spans residues 953–973 (EAERLLEKKDDDTSQKKETQL). 2 ZZ-type zinc fingers span residues 1013 to 1076 (CLQQ…EEPL) and 1125 to 1187 (LHDS…LQDY). Positions 1018, 1021, 1033, 1036, 1042, 1045, 1058, 1066, 1130, 1133, 1145, 1148, 1154, 1157, 1168, and 1177 each coordinate Zn(2+). Residues 1177–1260 (HVLQKYTLQD…DCSAPRCRDI (84 aa)) form a TAZ-type zinc finger.

The protein localises to the nucleus. It carries out the reaction L-lysyl-[protein] + acetyl-CoA = N(6)-acetyl-L-lysyl-[protein] + CoA + H(+). Its function is as follows. Acetyltransferase enzyme. Acetylates histones, giving a specific tag for transcriptional activation. This is Probable histone acetyltransferase HAC-like 3 from Oryza sativa subsp. japonica (Rice).